Consider the following 515-residue polypeptide: 2-isopropylmalate synthase (515 aa).

Residues Val-5 to His-267 enclose the Pyruvate carboxyltransferase domain. 4 residues coordinate Mn(2+): Asp-14, His-202, His-204, and Asn-238. A regulatory domain region spans residues Lys-392 to Val-515.

It belongs to the alpha-IPM synthase/homocitrate synthase family. LeuA type 1 subfamily. Homodimer. The cofactor is Mn(2+).

The protein localises to the cytoplasm. The enzyme catalyses 3-methyl-2-oxobutanoate + acetyl-CoA + H2O = (2S)-2-isopropylmalate + CoA + H(+). It functions in the pathway amino-acid biosynthesis; L-leucine biosynthesis; L-leucine from 3-methyl-2-oxobutanoate: step 1/4. In terms of biological role, catalyzes the condensation of the acetyl group of acetyl-CoA with 3-methyl-2-oxobutanoate (2-ketoisovalerate) to form 3-carboxy-3-hydroxy-4-methylpentanoate (2-isopropylmalate). The polypeptide is 2-isopropylmalate synthase (Aliivibrio salmonicida (strain LFI1238) (Vibrio salmonicida (strain LFI1238))).